Reading from the N-terminus, the 236-residue chain is Small ribosomal subunit protein uS2c (236 aa).

This sequence belongs to the universal ribosomal protein uS2 family.

It localises to the plastid. The protein resides in the chloroplast. This chain is Small ribosomal subunit protein uS2c (rps2), found in Ipomoea purpurea (Common morning glory).